The following is a 275-amino-acid chain: Undecaprenyl-diphosphatase (275 aa).

A run of 7 helical transmembrane segments spans residues 1 to 21 (MTTFKAILLGIVQGLTEFLPV), 41 to 61 (ILFLTILLHVGTLFSVFFVYA), 95 to 115 (LLIIVATIPTGIIGLFFKDLF), 118 to 138 (FYNSTLIIGISLLVTGTLLWT), 192 to 212 (ATKFSFLISIPAILGATVFEV), 223 to 243 (FTLTMLIAGVLASFLSGVFAI), and 255 to 275 (LYYFSYYTWTVGSIVILFSLL).

The protein belongs to the UppP family.

It is found in the cell membrane. It carries out the reaction di-trans,octa-cis-undecaprenyl diphosphate + H2O = di-trans,octa-cis-undecaprenyl phosphate + phosphate + H(+). In terms of biological role, catalyzes the dephosphorylation of undecaprenyl diphosphate (UPP). Confers resistance to bacitracin. The protein is Undecaprenyl-diphosphatase of Alkaliphilus metalliredigens (strain QYMF).